Reading from the N-terminus, the 121-residue chain is Large ribosomal subunit protein uL18 (121 aa).

It belongs to the universal ribosomal protein uL18 family. As to quaternary structure, part of the 50S ribosomal subunit; part of the 5S rRNA/L5/L18/L25 subcomplex. Contacts the 5S and 23S rRNAs.

In terms of biological role, this is one of the proteins that bind and probably mediate the attachment of the 5S RNA into the large ribosomal subunit, where it forms part of the central protuberance. In Streptococcus thermophilus (strain CNRZ 1066), this protein is Large ribosomal subunit protein uL18.